A 188-amino-acid polypeptide reads, in one-letter code: Elongation factor P (188 aa).

This sequence belongs to the elongation factor P family.

Its subcellular location is the cytoplasm. The protein operates within protein biosynthesis; polypeptide chain elongation. Functionally, involved in peptide bond synthesis. Stimulates efficient translation and peptide-bond synthesis on native or reconstituted 70S ribosomes in vitro. Probably functions indirectly by altering the affinity of the ribosome for aminoacyl-tRNA, thus increasing their reactivity as acceptors for peptidyl transferase. The chain is Elongation factor P from Methylorubrum extorquens (strain CM4 / NCIMB 13688) (Methylobacterium extorquens).